We begin with the raw amino-acid sequence, 211 residues long: Ribosomal RNA small subunit methyltransferase G (211 aa).

Residues Gly73, Ile126–Glu127, and Arg142 each bind S-adenosyl-L-methionine.

The protein belongs to the methyltransferase superfamily. RNA methyltransferase RsmG family.

Its subcellular location is the cytoplasm. The catalysed reaction is guanosine(527) in 16S rRNA + S-adenosyl-L-methionine = N(7)-methylguanosine(527) in 16S rRNA + S-adenosyl-L-homocysteine. In terms of biological role, specifically methylates the N7 position of guanine in position 527 of 16S rRNA. This is Ribosomal RNA small subunit methyltransferase G from Methylorubrum extorquens (strain CM4 / NCIMB 13688) (Methylobacterium extorquens).